We begin with the raw amino-acid sequence, 633 residues long: MNSGSRIELLSPRLANQIAAGEVVERPASVIKELLENSIDSGAKRIDVDVEQGGVKLLRVRDDGSGISSDDLPLALARHATSKIRDLEDLERVMSLGFRGEALASISSVARLTLTSRTRDADQAWQVETEGRDMAPRVQPAAHPVGTSVEVRDLFFNTPARRKFLKAEKTEFDHLQEVIKRLALARFDVAFHLRHNGKTILSLHEAHDDAARARRVSAICGAGFLEQALPIEIERNGLRLWGWVGLPTFSRSQADLQYFFVNGRAVRDKLVAHAVRQAYRDVLFNGRHPTFVLFFEVDPSVVDVNVHPTKHEVRFRDGRMVHDFLYGTLHRTLGDVRPDDQLSAPIVTAVVRPSGPEAGEFGPQGEMSLAANLLQSPQPQPSYTAPGSGSGAGYQYQYTPRPQSAVPVAEAQAAYREFFAPLPGAEPGAPVALPEGGGDIPPLGYALAQLKGIYILAENAHGLVLVDMHAAHERIMYERLKIAMASEGLSGQPLLVPESLAVSQREADCAEEHHSVFQKLGFELQRLGPETLAIRQIPALLKQAEANRLVADVLADLMEYGTSDRIQAHINELLGTMACHGAIRANRRLALPEMNGLLRDMENTERSGQCNHGRPTWTQMGLDDLDKLFLRGR.

It belongs to the DNA mismatch repair MutL/HexB family.

Functionally, this protein is involved in the repair of mismatches in DNA. It is required for dam-dependent methyl-directed DNA mismatch repair. May act as a 'molecular matchmaker', a protein that promotes the formation of a stable complex between two or more DNA-binding proteins in an ATP-dependent manner without itself being part of a final effector complex. This Pseudomonas fluorescens (strain SBW25) protein is DNA mismatch repair protein MutL.